A 101-amino-acid polypeptide reads, in one-letter code: UPF0358 protein EF_2458 (101 aa).

It belongs to the UPF0358 family.

In Enterococcus faecalis (strain ATCC 700802 / V583), this protein is UPF0358 protein EF_2458.